Consider the following 396-residue polypeptide: Enoyl-[acyl-carrier-protein] reductase [NADH] (396 aa).

NAD(+) contacts are provided by residues G47 to F52, F73 to E74, D110 to A111, and L138 to A139. A substrate-binding site is contributed by Y224. Residue Y234 is the Proton donor of the active site. NAD(+) contacts are provided by residues K243 and L272–T274.

It belongs to the TER reductase family. Monomer.

The catalysed reaction is a 2,3-saturated acyl-[ACP] + NAD(+) = a (2E)-enoyl-[ACP] + NADH + H(+). Its pathway is lipid metabolism; fatty acid biosynthesis. In terms of biological role, involved in the final reduction of the elongation cycle of fatty acid synthesis (FAS II). Catalyzes the reduction of a carbon-carbon double bond in an enoyl moiety that is covalently linked to an acyl carrier protein (ACP). This Flavobacterium johnsoniae (strain ATCC 17061 / DSM 2064 / JCM 8514 / BCRC 14874 / CCUG 350202 / NBRC 14942 / NCIMB 11054 / UW101) (Cytophaga johnsonae) protein is Enoyl-[acyl-carrier-protein] reductase [NADH].